Here is a 698-residue protein sequence, read N- to C-terminus: Elongation factor G (698 aa).

Residues alanine 8–leucine 284 enclose the tr-type G domain. Residues alanine 17–threonine 24, aspartate 81–histidine 85, and asparagine 135–aspartate 138 contribute to the GTP site.

It belongs to the TRAFAC class translation factor GTPase superfamily. Classic translation factor GTPase family. EF-G/EF-2 subfamily.

Its subcellular location is the cytoplasm. Functionally, catalyzes the GTP-dependent ribosomal translocation step during translation elongation. During this step, the ribosome changes from the pre-translocational (PRE) to the post-translocational (POST) state as the newly formed A-site-bound peptidyl-tRNA and P-site-bound deacylated tRNA move to the P and E sites, respectively. Catalyzes the coordinated movement of the two tRNA molecules, the mRNA and conformational changes in the ribosome. In Salinispora tropica (strain ATCC BAA-916 / DSM 44818 / JCM 13857 / NBRC 105044 / CNB-440), this protein is Elongation factor G.